A 248-amino-acid chain; its full sequence is MSFVVIIPARYASTRLPGKPLVDINGKPMIVHVLERARESGAERIIVATDHEDVARAVEAAGGEVCMTRADHQSGTERLAEVVEKCAFSDDTVIVNVQGDEPMIPATIIRQVADNLAQRQVGMATLAVPIHNAEEAFNPNAVKVVLDAEGYALYFSRATIPWDRDRFAKGLETVGDNFLRHLGIYGYRAGFIRRYVTWQPSPLEHIEMLEQLRVLWYGEKIHVAVAHEVPGTGVDTPEDLERVRAEMR.

This sequence belongs to the KdsB family. Requires Mg(2+) as cofactor.

It localises to the cytoplasm. It carries out the reaction 3-deoxy-alpha-D-manno-oct-2-ulosonate + CTP = CMP-3-deoxy-beta-D-manno-octulosonate + diphosphate. The protein operates within nucleotide-sugar biosynthesis; CMP-3-deoxy-D-manno-octulosonate biosynthesis; CMP-3-deoxy-D-manno-octulosonate from 3-deoxy-D-manno-octulosonate and CTP: step 1/1. It participates in bacterial outer membrane biogenesis; lipopolysaccharide biosynthesis. Its function is as follows. Activates KDO (a required 8-carbon sugar) for incorporation into bacterial lipopolysaccharide in Gram-negative bacteria. This Escherichia coli O157:H7 protein is 3-deoxy-manno-octulosonate cytidylyltransferase.